The primary structure comprises 508 residues: Photosystem II CP47 reaction center protein (508 aa).

The next 6 helical transmembrane spans lie at 21-36 (AVHIMHTALVAGWAGS), 101-115 (IVFSGLCFLAAIWHW), 140-156 (GIHLFLAGLACFGFGAF), 203-218 (IAAGTLGILAGLFHLS), 237-252 (VLSSSIAAVFFAAFVV), and 457-472 (SFALLFFFGHIWHGSR).

Belongs to the PsbB/PsbC family. PsbB subfamily. PSII is composed of 1 copy each of membrane proteins PsbA, PsbB, PsbC, PsbD, PsbE, PsbF, PsbH, PsbI, PsbJ, PsbK, PsbL, PsbM, PsbT, PsbX, PsbY, PsbZ, Psb30/Ycf12, at least 3 peripheral proteins of the oxygen-evolving complex and a large number of cofactors. It forms dimeric complexes. Requires Binds multiple chlorophylls. PSII binds additional chlorophylls, carotenoids and specific lipids. as cofactor.

It localises to the plastid. The protein resides in the chloroplast thylakoid membrane. Functionally, one of the components of the core complex of photosystem II (PSII). It binds chlorophyll and helps catalyze the primary light-induced photochemical processes of PSII. PSII is a light-driven water:plastoquinone oxidoreductase, using light energy to abstract electrons from H(2)O, generating O(2) and a proton gradient subsequently used for ATP formation. The sequence is that of Photosystem II CP47 reaction center protein from Lotus japonicus (Lotus corniculatus var. japonicus).